The following is a 299-amino-acid chain: Sugar transporter SWEET1 (299 aa).

The MtN3/slv 1 domain occupies 7–91 (QVLSISAITT…CVFFLIYSLP (85 aa)). The next 7 helical transmembrane spans lie at 8–28 (VLSI…IPIC), 36–56 (AVGD…SFWL), 67–87 (MIIV…FFLI), 95–115 (FTCQ…WIAL), 124–144 (VICM…LGVV), 155–175 (LPMC…GNLV), and 180–200 (IIIP…LFVV). The MtN3/slv 2 domain occupies 121–205 (YLGVICMTFN…ALFVVLPIRE (85 aa)). Positions 230-299 (RGDCIVSSPP…DPDLSSIQSP (70 aa)) are disordered. A compositionally biased stretch (basic and acidic residues) spans 247-261 (NETRSDVEDKFDKLM). Residues 276–299 (SMGSPPSYKSRSSSDPDLSSIQSP) are compositionally biased toward low complexity.

This sequence belongs to the SWEET sugar transporter family.

Its subcellular location is the golgi apparatus membrane. It localises to the cell membrane. Its function is as follows. Mediates both low-affinity uptake and efflux of sugar across the membrane. This Caenorhabditis elegans protein is Sugar transporter SWEET1 (swt-1).